The following is a 1158-amino-acid chain: MTLHAYLGRAGTGKSTKMLTEIKQKMKADPLGDPIILIAPTQSTFQLEQAFVNDPELNGSLRTEVLHFERLSHRIFQEVGSYSEQKLSKAATEMMIYNIVQEQQKYLKLYQSQAKYYGFSEKLTEQIQDFKKYAVTPEHLEHFIADKNMQTRTKNKLEDIALIYREFEQRIQNEFITGEDSLQYFIDCMPKSEWLKRADIYIDGFHNFSTIEYLIIKGLIKYAKSVTIILTTDGNHDQFSLFRKPSEVLRHIEEIANELNISIERQYFNQLYRFNNQDLKHLEQEFDVLQINRVACQGHINILESATMREEINEIARRIIVDIRDKQLRYQDIAILYRDESYAYLFDSILPLYNIPYNIDTKRSMTHHPVMEMIRSLIEVIQSNWQVNPMLRLLKTDVLTASYLKSAYLVDLLENFVLERGIYGKRWLDDELFNVEHFSKMGRKAHKLTEDERNTFEQVVKLKKDVIDKILHFEKQMSQAETVKDFATAFYESMEYFELPNQLMTERDELDLNGNHEKAEEIDQIWNGLIQILDDLVLVFGDEPMSMERFLEVFDIGLEQLEFVMIPQTLDQVSIGTMDLAKVDNKQHVFLVGMNDGTMPQPVTASSLITDEEKKYFEQQANVELSPTSDILQMDEAFVCYIAMTRARQDVTFSYSLMGSSGDDKEISPFLNQIQSLFNQLEITNIPQYHEVNPLSLMQHAKQTKITLFEALRAWLYDEIVADSWLDAYQVIRDSDHLNQGLDYLMSALTFDNETVKLGETLSKDLYGKEINASVSRFEGYQQCPFKHYASHGLKLNERTKYELQNFDLGDIFHSVLKYISERINGDFKQLDLKKIRQLTNEALEEILPKVQFNLLNSSAYYRYLSRRIGAIVETTLSALKYQGTYSKFMPKHFETSFRRKPRTNDELIAQTLTTTQGIPINIRGQIDRIDTYTKNDTSFVNIIDYKSSEGSATLDLTKVYYGMQMQMMTYMDIVLQNKQRLGLTDIVKPGGLLYFHVHEPRIKFKSWSDIDEDKLEQDLIKKFKLSGLVNADQTVIDALDIRLEPKFTSDIVPVGLNKDGSLSKRGSQVADEATIYKFIQHNKENFIETASNIMDGHTEVAPLKYKQKLPCAFCSYQSVCHVDGMIDSKRYRTVDETINPIEAIQNININDEFGGEQ.

The UvrD-like helicase ATP-binding domain maps to 1 to 275; it reads MTLHAYLGRA…QYFNQLYRFN (275 aa). 8–15 contacts ATP; sequence GRAGTGKS. The region spanning 269 to 583 is the UvrD-like helicase C-terminal domain; the sequence is NQLYRFNNQD…SIGTMDLAKV (315 aa). [4Fe-4S] cluster contacts are provided by Cys784, Cys1112, Cys1115, and Cys1121.

The protein belongs to the helicase family. AddB/RexB type 1 subfamily. As to quaternary structure, heterodimer of AddA and AddB. The cofactor is Mg(2+). It depends on [4Fe-4S] cluster as a cofactor.

In terms of biological role, the heterodimer acts as both an ATP-dependent DNA helicase and an ATP-dependent, dual-direction single-stranded exonuclease. Recognizes the chi site generating a DNA molecule suitable for the initiation of homologous recombination. The AddB subunit has 5' -&gt; 3' nuclease activity but not helicase activity. The protein is ATP-dependent helicase/deoxyribonuclease subunit B of Staphylococcus aureus (strain MW2).